We begin with the raw amino-acid sequence, 642 residues long: Threonine--tRNA ligase (642 aa).

The TGS domain maps to 1–61; it reads MPIITLPDGS…SEDANLEIIT (61 aa). Positions 243-534 are catalytic; that stretch reads DHRKIGKALD…ITEEYAGFFP (292 aa). Zn(2+)-binding residues include cysteine 334, histidine 385, and histidine 511.

Belongs to the class-II aminoacyl-tRNA synthetase family. In terms of assembly, homodimer. It depends on Zn(2+) as a cofactor.

It localises to the cytoplasm. The enzyme catalyses tRNA(Thr) + L-threonine + ATP = L-threonyl-tRNA(Thr) + AMP + diphosphate + H(+). Functionally, catalyzes the attachment of threonine to tRNA(Thr) in a two-step reaction: L-threonine is first activated by ATP to form Thr-AMP and then transferred to the acceptor end of tRNA(Thr). Also edits incorrectly charged L-seryl-tRNA(Thr). The polypeptide is Threonine--tRNA ligase (Histophilus somni (strain 129Pt) (Haemophilus somnus)).